We begin with the raw amino-acid sequence, 199 residues long: Probable NADH dehydrogenase [ubiquinone] iron-sulfur protein 7, mitochondrial (199 aa).

The transit peptide at 1-16 directs the protein to the mitochondrion; that stretch reads MLSALRTAGALSTRRL. Cysteine 74, cysteine 75, cysteine 139, and cysteine 169 together coordinate [4Fe-4S] cluster.

This sequence belongs to the complex I 20 kDa subunit family. Complex I is composed of 45 different subunits This is a component of the iron-sulfur (IP) fragment of the enzyme. It depends on [4Fe-4S] cluster as a cofactor.

The protein resides in the mitochondrion. It catalyses the reaction a ubiquinone + NADH + 5 H(+)(in) = a ubiquinol + NAD(+) + 4 H(+)(out). Its function is as follows. Core subunit of the mitochondrial membrane respiratory chain NADH dehydrogenase (Complex I) that is believed to belong to the minimal assembly required for catalysis. Complex I functions in the transfer of electrons from NADH to the respiratory chain. The immediate electron acceptor for the enzyme is believed to be ubiquinone. In Caenorhabditis briggsae, this protein is Probable NADH dehydrogenase [ubiquinone] iron-sulfur protein 7, mitochondrial.